Consider the following 462-residue polypeptide: Elongation factor 1-alpha 1 (462 aa).

Glycine 2 bears the N,N,N-trimethylglycine mark. A tr-type G domain is found at 5–242; that stretch reads KTHINIVVIG…DCILPPTRPT (238 aa). The segment at 14 to 21 is G1; it reads GHVDSGKS. 14–21 serves as a coordination point for GTP; the sequence is GHVDSGKS. The residue at position 36 (lysine 36) is an N6,N6,N6-trimethyllysine; alternate. Position 36 is an N6,N6-dimethyllysine; alternate (lysine 36). An N6-methyllysine; alternate modification is found at lysine 36. Residue lysine 55 is modified to N6,N6-dimethyllysine. The G2 stretch occupies residues 70-74; the sequence is GITID. Lysine 79 carries the post-translational modification N6,N6,N6-trimethyllysine; by EEF1AKMT1. The interval 91–94 is G3; sequence DAPG. 153–156 is a GTP binding site; the sequence is NKMD. The segment at 153–156 is G4; that stretch reads NKMD. Lysine 165 is modified (N6,N6,N6-trimethyllysine; alternate; by EEF1AKMT3). Lysine 165 bears the N6,N6-dimethyllysine; alternate; by EEF1AKMT3 mark. Lysine 165 is subject to N6-acetyllysine; alternate. Lysine 165 is modified (N6-methyllysine; alternate; by EEF1AKMT3). Lysine 172 bears the N6-acetyllysine mark. 194-196 contributes to the GTP binding site; that stretch reads SGW. A G5 region spans residues 194 to 196; the sequence is SGW. Lysine 273 carries the post-translational modification N6-acetyllysine. Position 300 is a phosphoserine; by TGFBR1 (serine 300). Glutamate 301 carries the 5-glutamyl glycerylphosphorylethanolamine modification. At lysine 318 the chain carries N6,N6,N6-trimethyllysine; by EEF1AKMT2. Glutamate 374 is subject to 5-glutamyl glycerylphosphorylethanolamine. A Glycyl lysine isopeptide (Lys-Gly) (interchain with G-Cter in ubiquitin) cross-link involves residue lysine 385. Lysine 392 carries the post-translational modification N6-acetyllysine; alternate. The residue at position 392 (lysine 392) is an N6-succinyllysine; alternate. The residue at position 432 (threonine 432) is a Phosphothreonine; by PASK. Lysine 439 is modified (N6-acetyllysine).

The protein belongs to the TRAFAC class translation factor GTPase superfamily. Classic translation factor GTPase family. EF-Tu/EF-1A subfamily. Found in a nuclear export complex with XPO5, EEF1A1, Ran and aminoacylated tRNA. Interacts with PARP1 and TXK. Interacts with KARS1. May interact with ERGIC2. Interacts with IFIT1 (via TPR repeats 4-7). Interacts with DLC1, facilitating distribution to the membrane periphery and ruffles upon growth factor stimulation. Interacts with ZPR1; the interaction occurs in a epidermal growth factor (EGF)-dependent manner. Interacts with PPP1R16B. Interacts with SPHK1 and SPHK2; both interactions increase SPHK1 and SPHK2 kinase activity. Interacts with guanyl-nucleotide exchange factor EEF1B2. Interacts (via middle-region) with HTATIP2 (via N-terminus); the interaction is direct and competes with EEF1A1 binding to guanyl-nucleotide exchange factor EEF1B2, thereby inhibiting GDP for GTP exchange and reactivation of EEF1A1. Interacts with tRNA. Post-translationally, ISGylated. Phosphorylated by TXK. Phosphorylation by PASK increases translation efficiency. Phosphorylated by ROCK2. Phosphorylation by TGFBR1 inhibits translation elongation. In terms of processing, trimethylated at Lys-79 by EEF1AKMT1. Methylated at Lys-165 by EEF1AKMT3, methylation by EEF1AKMT3 is dynamic as well as inducible by stress conditions, such as ER-stress, and plays a regulatory role on mRNA translation. Trimethylated at Lys-318 by EEF1AKMT2. Mono-, di-, and trimethylated at Lys-36 by EEF1AKMT4; trimethylated form is predominant. Methylation by EEF1AKMT4 contributes to the fine-tuning of translation rates for a subset of tRNAs. Trimethylated at Gly-2 by METTL13. Mono- and dimethylated at Lys-55 by METTL13; dimethylated form is predominant. Post-translationally, ubiquitinated at Lys-385 by RNF14 in response to ribosome collisions (ribosome stalling), leading to its degradation by the proteasome and rescue of stalled ribosomes.

It is found in the cytoplasm. The protein localises to the nucleus. The protein resides in the nucleolus. Its subcellular location is the cell membrane. The catalysed reaction is GTP + H2O = GDP + phosphate + H(+). In terms of biological role, translation elongation factor that catalyzes the GTP-dependent binding of aminoacyl-tRNA (aa-tRNA) to the A-site of ribosomes during the elongation phase of protein synthesis. Base pairing between the mRNA codon and the aa-tRNA anticodon promotes GTP hydrolysis, releasing the aa-tRNA from EEF1A1 and allowing its accommodation into the ribosome. The growing protein chain is subsequently transferred from the P-site peptidyl tRNA to the A-site aa-tRNA, extending it by one amino acid through ribosome-catalyzed peptide bond formation. Also plays a role in the positive regulation of IFNG transcription in T-helper 1 cells as part of an IFNG promoter-binding complex with TXK and PARP1. Also plays a role in cytoskeleton organization by promoting actin bundling. This chain is Elongation factor 1-alpha 1 (EEF1A1), found in Cricetulus griseus (Chinese hamster).